We begin with the raw amino-acid sequence, 92 residues long: Large ribosomal subunit protein eL37 (92 aa).

Residues Cys19, Cys22, Cys34, and Cys37 each contribute to the Zn(2+) site. Residues Cys19 to Cys37 form a C4-type zinc finger.

It belongs to the eukaryotic ribosomal protein eL37 family. Zn(2+) serves as cofactor.

In terms of biological role, binds to the 23S rRNA. The sequence is that of Large ribosomal subunit protein eL37 (RpL37) from Spodoptera frugiperda (Fall armyworm).